The chain runs to 713 residues: Calpain-1 catalytic subunit (713 aa).

A Calpain catalytic domain is found at 55 to 354; it reads LFQDDAFPPV…FTKLEICNLT (300 aa). Catalysis depends on residues C115, H272, and N296. T354 is modified (phosphothreonine). Residues 355-525 form a domain III region; sequence PDALKSRTLR…KKAGTQELDD (171 aa). The linker stretch occupies residues 526–541; it reads QIQANLPDEKVLSEEE. Positions 542-712 are domain IV; that stretch reads IDDNFKTLFS…LFKWLQLTMF (171 aa). EF-hand domains lie at 557–575, 584–609, 614–649, and 679–713; these read DMEI…IISK, FSLE…LVEF, NRIR…AGFK, and VRLE…TMFA. The Ca(2+) site is built by D597, D599, N601, K603, E608, D627, D629, S631, S633, and E638.

It belongs to the peptidase C2 family. In terms of assembly, forms a heterodimer with a small (regulatory) subunit CAPNS1. Requires Ca(2+) as cofactor. Undergoes calcium-induced successive autoproteolytic cleavages that generate a membrane-bound 78 kDa active form and an intracellular 75 kDa active form. Calpastatin reduces with high efficiency the transition from 78 kDa to 75 kDa calpain forms.

The protein resides in the cytoplasm. Its subcellular location is the cell membrane. The catalysed reaction is Broad endopeptidase specificity.. Activated by micromolar concentrations of calcium and inhibited by calpastatin. Calcium-regulated non-lysosomal thiol-protease which catalyzes limited proteolysis of substrates involved in cytoskeletal remodeling and signal transduction. Proteolytically cleaves CTBP1 at 'Asn-364', 'Gly-377' and 'His-399'. Cleaves and activates caspase-7 (CASP7). The chain is Calpain-1 catalytic subunit from Rattus norvegicus (Rat).